A 455-amino-acid polypeptide reads, in one-letter code: Phosphoglycerate kinase, glycosomal (455 aa).

12 residues coordinate (2R)-3-phosphoglycerate: Val23, Asp24, Phe25, Asn26, Arg39, Ser61, His62, Gly64, Arg65, Arg132, His168, and Arg169. ADP is bound by residues Gly214 and Ala215. Gly214 contacts CDP. AMP is bound by residues Ala215 and Lys216. Residue Ala215 coordinates ATP. Mg(2+) is bound at residue Ala215. A (2R)-3-phosphoglycerate-binding site is contributed by Lys216. Asp219 contributes to the CDP binding site. Asp219 provides a ligand contact to Mg(2+). 2 residues coordinate ADP: Lys220 and Gly238. AMP is bound at residue Lys220. Residue Lys220 coordinates ATP. CDP is bound at residue Gly238. AMP contacts are provided by Ala239 and Ala311. The ATP site is built by Ala239 and Ala311. Ala311 and Asn335 together coordinate ADP. CDP-binding residues include Gly336 and Phe341. Residues Phe341, Glu342, Asp374, and Thr375 each contribute to the ADP site. Glu342 contacts AMP. ATP-binding residues include Glu342, Asp374, and Thr375. Asp374 contributes to the Mg(2+) binding site. Positions 417–455 (DAKAPAAAAAAGGDCPCGSGCAAVPAAATATVSMVLASP) are topogenic signal.

Belongs to the phosphoglycerate kinase family. Monomer. Mg(2+) serves as cofactor.

The protein localises to the glycosome. It catalyses the reaction (2R)-3-phosphoglycerate + ATP = (2R)-3-phospho-glyceroyl phosphate + ADP. Its pathway is carbohydrate degradation; glycolysis; pyruvate from D-glyceraldehyde 3-phosphate: step 2/5. The protein is Phosphoglycerate kinase, glycosomal (PGKC) of Crithidia fasciculata.